Consider the following 820-residue polypeptide: Probable ATP-dependent RNA helicase DDX23 (820 aa).

Basic and acidic residues predominate over residues 1-42 (MAGELADKKDRDASPSKEERKRSRTPDRERDRDRDRKSSPSK). Residues 1-244 (MAGELADKKD…QKIREEKDKS (244 aa)) form a disordered region. Residues Ser14 and Ser16 each carry the phosphoserine modification. Residues 43-65 (DRKRHRSRDRRRGGSRSRSRSRS) show a composition bias toward basic residues. Residues 66–105 (KSAERERRHKERERDKERDRNKKDRDRDKDGHRRDKDRKR) show a composition bias toward basic and acidic residues. A phosphoserine mark is found at Ser107 and Ser109. 3 stretches are compositionally biased toward basic and acidic residues: residues 112–137 (RGKD…DKKP), 147–226 (LLAK…RETN), and 233–244 (GRQKIREEKDKS). A Q motif motif is present at residues 391–419 (RSWKDSSLPPHILEVIDKCGYKEPTPIQR). The Helicase ATP-binding domain maps to 422–627 (IPIGLQNRDI…RSYLRRPAVV (206 aa)). 435-442 (AETGSGKT) lines the ATP pocket. The short motif at 549 to 552 (DEAD) is the DEAD box element. The Helicase C-terminal domain occupies 651 to 799 (KRKKLLAILE…SCPPELANHP (149 aa)). Glycyl lysine isopeptide (Lys-Gly) (interchain with G-Cter in SUMO2) cross-links involve residues Lys686 and Lys811.

This sequence belongs to the DEAD box helicase family. DDX23/PRP28 subfamily. In terms of assembly, the phosphorylated form (by SRPK2) is a component of the U4/U6-U5 tri-snRNP complex composed of the U4, U6 and U5 snRNAs and at least PRPF3, PRPF4, PRPF6, PRPF8, PRPF31, SNRNP200, TXNL4A, WDR57, SNRNP40, DDX23, CD2BP2, PPIH, SNU13, EFTUD2, SART1 and USP39. Identified in the spliceosome C complex. Interacts with ERBB4. Interacts with ERCC6. In vitro phosphorylated by CLK1 and U1 snRNP-associated protein kinase. Phosphorylated by SRPK2 and this phosphorylation is required for its association with the tri-snRNP (U4/U6-U5 tri-small nuclear ribonucleoproteins) and subsequent spliceosomal B complex formation. May be phosphorylated by SRPK2 on Ser residues in the SR domain; the phosphorylation is required for the removal of inappropriate R-loops during transcription.

It is found in the nucleus. Its subcellular location is the chromosome. The catalysed reaction is ATP + H2O = ADP + phosphate + H(+). In terms of biological role, involved in pre-mRNA splicing and its phosphorylated form (by SRPK2) is required for spliceosomal B complex formation. Independently of its spliceosome formation function, required for the suppression of incorrect R-loops formed during transcription; R-loops are composed of a DNA:RNA hybrid and the associated non-template single-stranded DNA. The sequence is that of Probable ATP-dependent RNA helicase DDX23 from Homo sapiens (Human).